The sequence spans 266 residues: Type II iodothyronine deiodinase (266 aa).

The Lumenal segment spans residues 1–9 (MGLLSVDLL). A helical; Signal-anchor for type III membrane protein membrane pass occupies residues 10 to 34 (ITLQILPVFFSNCLFLALYDSVILL). At 35–266 (KHVALLLSRS…KNFSKRUILD (232 aa)) the chain is on the cytoplasmic side. Sec-130 is an active-site residue. 2 non-standard amino acids (selenocysteine) are found at residues Sec-130 and Sec-263.

Belongs to the iodothyronine deiodinase family. Predominantly monomer. Can form homodimers but homodimerization is not essential for enzyme activity. Interacts with USP20 and USP33. Interacts with MARCHF6. Ubiquitinated by MARCHF6, leading to its degradation by the proteasome. Deubiquitinated by USP20 and USP33. Expressed in cerebral cortex, cerebellum, pituitary gland, mostly in anterior pituitary gland, and pineal gland, as well as in brown adipose tissue (BAT).

It localises to the endoplasmic reticulum membrane. The catalysed reaction is 3,3',5-triiodo-L-thyronine + iodide + A + H(+) = L-thyroxine + AH2. It carries out the reaction 3,3'-diiodo-L-thyronine + iodide + A + H(+) = 3,3',5'-triiodo-L-thyronine + AH2. The enzyme catalyses 3'-iodo-L-thyronine + iodide + A + H(+) = 3',5'-diiodo-L-thyronine + AH2. It catalyses the reaction 3,3'-diiodothyronamine + iodide + A + H(+) = 3,3',5'-triiodothyronamine + AH2. The catalysed reaction is 3'-iodothyronamine + iodide + A + H(+) = 3',5'-diiodothyronamine + AH2. Its function is as follows. Plays a crucial role in the metabolism of thyroid hormones (TH) and has specific roles in TH activation and inactivation by deiodination. Catalyzes the deiodination of L-thyroxine (T4) to 3,5,3'-triiodothyronine (T3) and 3',5'-diiodothyronine (3',5'-T2) to 3'-monoiodothyronine (3'-T1) via outer-ring deiodination (ORD). Catalyzes the deiodination of 3,3',5'-triiodothyronine (rT3) to 3,3'-diiodothyronine (3,3'-T2) via ORD. Catalyzes the phenolic ring deiodinations of 3,3',5'-triiodothyronamine and 3',5'- diiodothyronamine. The sequence is that of Type II iodothyronine deiodinase (Dio2) from Rattus norvegicus (Rat).